A 167-amino-acid polypeptide reads, in one-letter code: Homing endonuclease I-ApeII (167 aa).

It belongs to the LAGLIDADG endonuclease family.

Functionally, endonuclease involved in rRNA intron I-gamma homing. The sequence is that of Homing endonuclease I-ApeII (apeII) from Aeropyrum pernix (strain ATCC 700893 / DSM 11879 / JCM 9820 / NBRC 100138 / K1).